The following is an 80-amino-acid chain: Sulfur carrier protein TusA (80 aa).

Residue cysteine 17 is the Cysteine persulfide intermediate of the active site.

It belongs to the sulfur carrier protein TusA family.

The protein resides in the cytoplasm. Functionally, sulfur carrier protein which probably makes part of a sulfur-relay system. In Pseudomonas putida (strain W619), this protein is Sulfur carrier protein TusA.